Reading from the N-terminus, the 161-residue chain is Cyclic pyranopterin monophosphate synthase (161 aa).

Residues Leu-73–His-75 and Met-110–Glu-111 each bind substrate. Asp-125 is a catalytic residue.

The protein belongs to the MoaC family. As to quaternary structure, homohexamer; trimer of dimers.

The enzyme catalyses (8S)-3',8-cyclo-7,8-dihydroguanosine 5'-triphosphate = cyclic pyranopterin phosphate + diphosphate. It participates in cofactor biosynthesis; molybdopterin biosynthesis. Its function is as follows. Catalyzes the conversion of (8S)-3',8-cyclo-7,8-dihydroguanosine 5'-triphosphate to cyclic pyranopterin monophosphate (cPMP). This chain is Cyclic pyranopterin monophosphate synthase, found in Pseudomonas syringae pv. syringae (strain B728a).